A 510-amino-acid chain; its full sequence is Hexose carrier protein HEX6 (510 aa).

Residues 1 to 22 lie on the Cytoplasmic side of the membrane; that stretch reads MAAGLAITSEGGQYNGRMTSFV. The next 12 helical transmembrane spans lie at 23 to 43, 83 to 103, 118 to 128, 140 to 160, 169 to 189, 202 to 222, 284 to 304, 325 to 345, 349 to 369, 382 to 402, 428 to 448, and 451 to 471; these read ALSC…IGVS, SFTS…SSVT, VFLAXAALGGA, VLLG…LSEM, INNG…LINY, ISLA…LFLP, LVMA…VIAF, IVTG…VDKL, ALFI…GSIM, GYAY…GWSW, AVSF…LCHF, and GIFF…HFLL. Residues 472–510 lie on the Cytoplasmic side of the membrane; it reads PETKKVPIEKMDIVWRDHWFWKKIIGEEAAEENNKMEAA.

This sequence belongs to the major facilitator superfamily. Sugar transporter (TC 2.A.1.1) family.

It is found in the membrane. Its function is as follows. Active uptake of hexoses. Probable glucose/hydrogen symport. This is Hexose carrier protein HEX6 (HEX6) from Ricinus communis (Castor bean).